Here is a 352-residue protein sequence, read N- to C-terminus: Ribosomal RNA large subunit methyltransferase M (352 aa).

Residues S184, 217–220 (APGG), D236, D256, and D272 each bind S-adenosyl-L-methionine. The active-site Proton acceptor is K301.

It belongs to the class I-like SAM-binding methyltransferase superfamily. RNA methyltransferase RlmE family. RlmM subfamily. In terms of assembly, monomer.

The protein localises to the cytoplasm. It carries out the reaction cytidine(2498) in 23S rRNA + S-adenosyl-L-methionine = 2'-O-methylcytidine(2498) in 23S rRNA + S-adenosyl-L-homocysteine + H(+). Its function is as follows. Catalyzes the 2'-O-methylation at nucleotide C2498 in 23S rRNA. The polypeptide is Ribosomal RNA large subunit methyltransferase M (Pseudomonas aeruginosa (strain UCBPP-PA14)).